Consider the following 245-residue polypeptide: tRNA pseudouridine synthase A (245 aa).

Asp52 acts as the Nucleophile in catalysis. Substrate is bound at residue Tyr111.

It belongs to the tRNA pseudouridine synthase TruA family. In terms of assembly, homodimer.

It catalyses the reaction uridine(38/39/40) in tRNA = pseudouridine(38/39/40) in tRNA. Its function is as follows. Formation of pseudouridine at positions 38, 39 and 40 in the anticodon stem and loop of transfer RNAs. In Rickettsia felis (strain ATCC VR-1525 / URRWXCal2) (Rickettsia azadi), this protein is tRNA pseudouridine synthase A.